We begin with the raw amino-acid sequence, 351 residues long: MSDPVFIAPKGGLTLGSVAEACGVPLPDGADPAQPVTGAAPLETAGPSELAYMDNARYGDALATTRALACLVSPRFAPRVPAGTIALVTRDPYRAYAGLLARLYEEAMRPGSLFAAAGVSPGAHVHPQARLEDGMRIDPGAVVGPGAEIGSGTVLGPNAVIGPNVRIGRDCSIGAGATLTHALVGNRVIVHPGARIGQDGFGFAMGAGGHIKVPQVGRVIIQDDVEIGANTTIDRGASRDTVVGEGTKIDNLVQIAHNVVIGRHCVIVSGVGISGSTTLEDYVVLGGQVGVVGHLRIGMGSQIAGSSNVNRDVPPGSRWGGTPAKPVRTWFREMTTLARLAERGGKDEAEG.

The active-site Proton acceptor is His-257.

Belongs to the transferase hexapeptide repeat family. LpxD subfamily. In terms of assembly, homotrimer.

It catalyses the reaction a UDP-3-O-[(3R)-3-hydroxyacyl]-alpha-D-glucosamine + a (3R)-hydroxyacyl-[ACP] = a UDP-2-N,3-O-bis[(3R)-3-hydroxyacyl]-alpha-D-glucosamine + holo-[ACP] + H(+). It functions in the pathway bacterial outer membrane biogenesis; LPS lipid A biosynthesis. In terms of biological role, catalyzes the N-acylation of UDP-3-O-acylglucosamine using 3-hydroxyacyl-ACP as the acyl donor. Is involved in the biosynthesis of lipid A, a phosphorylated glycolipid that anchors the lipopolysaccharide to the outer membrane of the cell. This chain is UDP-3-O-acylglucosamine N-acyltransferase, found in Methylorubrum extorquens (strain PA1) (Methylobacterium extorquens).